The primary structure comprises 79 residues: Conotoxin Kt6.1 (79 aa).

The first 22 residues, 1-22 (MKLTCVLIISVLFLTASQLITA), serve as a signal peptide directing secretion. A propeptide spanning residues 23–47 (VYSRDKQQYRAARLRDEMRNLKGAR) is cleaved from the precursor. Disulfide bonds link Cys49/Cys62, Cys56/Cys67, and Cys61/Cys77. Residues Pro60 and Pro63 each carry the 4-hydroxyproline modification.

The protein belongs to the conotoxin O1 superfamily. As to expression, expressed by the venom duct.

The protein localises to the secreted. Ion channel inhibitor that inhibits the increase in intracellular calcium upon depolarization in DRG neurons. In vivo, both intraperitoneal and intracranial injections into mice induce hyperactivity. This Conus kintoki (Cone snail) protein is Conotoxin Kt6.1.